The primary structure comprises 172 residues: MSSYSYTVAETQTFSVTHARHMAAKVATDLRRMQRFYGYPSDADIEAYEEELVVFLKAGYLGEVSYGFQKNNNWIEPTLRYTAGDLLGSGTDDDPGKIRPGKDVSGASFYSFMTYSSKYLNATQSEKDTALKDLPFKRVGAQSPGINGYLENDKTYSAGGRSLTRTSVRNFV.

The segment at A141–V172 is required for binding to CdnC and to confer phage immunity.

This sequence belongs to the bacterial HORMA family. HORMA1 subfamily. Forms complexes with CdnC with 1:1 and 2:2 stoichimetry, and a 1:1:6 CdnC:Cap7:Cap6 complex.

Functionally, sensor protein of a CBASS antivirus system. CBASS (cyclic oligonucleotide-based antiphage signaling system) provides immunity against bacteriophage. The CD-NTase protein synthesizes cyclic nucleotides in response to infection; these serve as specific second messenger signals. The signals activate a diverse range of effectors, leading to bacterial cell death and thus abortive phage infection. A type III-C(AAA) CBASS system. In terms of biological role, binds to a closure peptide (consensus His-Xaa-Xaa-Ile-Leu-Leu-Thr), which allows it to activate CdnC for second messenger synthesis. Its function is as follows. Protects E.coli strain JP313 against bacteriophage lambda cI- infection. When the cdnC-cap7-cap6-nucC operon is transformed into a susceptible strain it confers bacteriophage immunity. Mutations in the sensor (Cap7 also called HORMA) or effector proteins (CdnC, NucC) but not the disassembly protein (Cap6 also called Trip13) no longer confer immunity. The presence of the intact operon leads to culture collapse and cell death, which occurs before the phage has finished its replication cycle, thus protecting non-infected bacteria by aborting the phage infection and preventing its propagation. This Escherichia coli (strain MS 115-1) protein is CD-NTase-associated protein 7.